Consider the following 513-residue polypeptide: ATP synthase subunit alpha (513 aa).

Residue 169–176 (GDRQCGKT) participates in ATP binding.

The protein belongs to the ATPase alpha/beta chains family. F-type ATPases have 2 components, CF(1) - the catalytic core - and CF(0) - the membrane proton channel. CF(1) has five subunits: alpha(3), beta(3), gamma(1), delta(1), epsilon(1). CF(0) has three main subunits: a(1), b(2) and c(9-12). The alpha and beta chains form an alternating ring which encloses part of the gamma chain. CF(1) is attached to CF(0) by a central stalk formed by the gamma and epsilon chains, while a peripheral stalk is formed by the delta and b chains.

It is found in the cell inner membrane. It carries out the reaction ATP + H2O + 4 H(+)(in) = ADP + phosphate + 5 H(+)(out). Its function is as follows. Produces ATP from ADP in the presence of a proton gradient across the membrane. The alpha chain is a regulatory subunit. The chain is ATP synthase subunit alpha from Burkholderia ambifaria (strain MC40-6).